The chain runs to 471 residues: Steroid C26-monooxygenase (471 aa).

Position 238 (Gly-238) interacts with substrate. Residue Cys-412 coordinates heme.

Belongs to the cytochrome P450 family. Heme serves as cofactor.

The enzyme catalyses cholest-4-en-3-one + 6 reduced [2Fe-2S]-[ferredoxin] + 3 O2 + 5 H(+) = (25S)-3-oxocholest-4-en-26-oate + 6 oxidized [2Fe-2S]-[ferredoxin] + 4 H2O. Involved in the utilization of cholesterol as the sole carbon and energy source by degrading the side chain. Primarily catalyzes the sequential oxidation of the terminal methyl of cholest-4-en-3-one into (25S)-26-hydroxycholest-4-en-3-one (alcohol), (25S)-26-oxocholest-4-en-3-one (aldehyde), to finally yield the carboxylic acid (25S)-3-oxocholest-4-en-26-oate. Also able to sequentially oxidize cholesterol itself, not only cholest-4-en-3-one. The polypeptide is Steroid C26-monooxygenase (cyp125) (Rhodococcus jostii (strain RHA1)).